The primary structure comprises 374 residues: Probable quinol oxidase subunit 2 (374 aa).

Positions methionine 1 to glycine 19 are cleaved as a signal peptide. A lipid anchor (N-palmitoyl cysteine) is attached at cysteine 20. Cysteine 20 carries S-diacylglycerol cysteine lipidation. The next 2 membrane-spanning stretches (helical) occupy residues serine 43–phenylalanine 63 and isoleucine 82–valine 102. The segment at glutamate 317–histidine 374 is disordered. The span at glutamate 330–histidine 374 shows a compositional bias: basic and acidic residues.

It belongs to the cytochrome c oxidase subunit 2 family.

The protein resides in the cell membrane. It catalyses the reaction 2 a quinol + O2 = 2 a quinone + 2 H2O. Functionally, catalyzes quinol oxidation with the concomitant reduction of oxygen to water. Subunit II transfers the electrons from a quinol to the binuclear center of the catalytic subunit I. The protein is Probable quinol oxidase subunit 2 (qoxA) of Staphylococcus epidermidis (strain ATCC 12228 / FDA PCI 1200).